A 265-amino-acid chain; its full sequence is Tryptophan synthase alpha chain (265 aa).

Catalysis depends on proton acceptor residues glutamate 49 and aspartate 60.

This sequence belongs to the TrpA family. In terms of assembly, tetramer of two alpha and two beta chains.

The catalysed reaction is (1S,2R)-1-C-(indol-3-yl)glycerol 3-phosphate + L-serine = D-glyceraldehyde 3-phosphate + L-tryptophan + H2O. The protein operates within amino-acid biosynthesis; L-tryptophan biosynthesis; L-tryptophan from chorismate: step 5/5. The alpha subunit is responsible for the aldol cleavage of indoleglycerol phosphate to indole and glyceraldehyde 3-phosphate. The protein is Tryptophan synthase alpha chain of Desulfosudis oleivorans (strain DSM 6200 / JCM 39069 / Hxd3) (Desulfococcus oleovorans).